Consider the following 557-residue polypeptide: Dihydroxy-acid dehydratase (557 aa).

Aspartate 78 serves as a coordination point for Mg(2+). Cysteine 119 provides a ligand contact to [2Fe-2S] cluster. Aspartate 120 and lysine 121 together coordinate Mg(2+). An N6-carboxylysine modification is found at lysine 121. Residue cysteine 191 coordinates [2Fe-2S] cluster. Residue glutamate 442 coordinates Mg(2+). Serine 468 (proton acceptor) is an active-site residue.

The protein belongs to the IlvD/Edd family. In terms of assembly, homodimer. Requires [2Fe-2S] cluster as cofactor. The cofactor is Mg(2+).

The catalysed reaction is (2R)-2,3-dihydroxy-3-methylbutanoate = 3-methyl-2-oxobutanoate + H2O. It carries out the reaction (2R,3R)-2,3-dihydroxy-3-methylpentanoate = (S)-3-methyl-2-oxopentanoate + H2O. The protein operates within amino-acid biosynthesis; L-isoleucine biosynthesis; L-isoleucine from 2-oxobutanoate: step 3/4. It participates in amino-acid biosynthesis; L-valine biosynthesis; L-valine from pyruvate: step 3/4. Functionally, functions in the biosynthesis of branched-chain amino acids. Catalyzes the dehydration of (2R,3R)-2,3-dihydroxy-3-methylpentanoate (2,3-dihydroxy-3-methylvalerate) into 2-oxo-3-methylpentanoate (2-oxo-3-methylvalerate) and of (2R)-2,3-dihydroxy-3-methylbutanoate (2,3-dihydroxyisovalerate) into 2-oxo-3-methylbutanoate (2-oxoisovalerate), the penultimate precursor to L-isoleucine and L-valine, respectively. The polypeptide is Dihydroxy-acid dehydratase (Lachnoclostridium phytofermentans (strain ATCC 700394 / DSM 18823 / ISDg) (Clostridium phytofermentans)).